The primary structure comprises 1296 residues: DNA-directed RNA polymerase subunit beta' (1296 aa).

Cys-60, Cys-62, Cys-75, and Cys-78 together coordinate Zn(2+). The interval 188-209 is disordered; sequence GAKGDARRKVRESAEREMRQIR. Asp-535, Asp-537, and Asp-539 together coordinate Mg(2+). Residues Cys-877, Cys-954, Cys-961, and Cys-964 each contribute to the Zn(2+) site.

This sequence belongs to the RNA polymerase beta' chain family. In terms of assembly, the RNAP catalytic core consists of 2 alpha, 1 beta, 1 beta' and 1 omega subunit. When a sigma factor is associated with the core the holoenzyme is formed, which can initiate transcription. It depends on Mg(2+) as a cofactor. Requires Zn(2+) as cofactor.

It carries out the reaction RNA(n) + a ribonucleoside 5'-triphosphate = RNA(n+1) + diphosphate. Its function is as follows. DNA-dependent RNA polymerase catalyzes the transcription of DNA into RNA using the four ribonucleoside triphosphates as substrates. In Parafrankia sp. (strain EAN1pec), this protein is DNA-directed RNA polymerase subunit beta'.